We begin with the raw amino-acid sequence, 450 residues long: Glucose-6-phosphate isomerase (450 aa).

Catalysis depends on Glu-290, which acts as the Proton donor. Residues His-311 and Lys-425 contribute to the active site.

The protein belongs to the GPI family.

The protein resides in the cytoplasm. It carries out the reaction alpha-D-glucose 6-phosphate = beta-D-fructose 6-phosphate. It participates in carbohydrate biosynthesis; gluconeogenesis. It functions in the pathway carbohydrate degradation; glycolysis; D-glyceraldehyde 3-phosphate and glycerone phosphate from D-glucose: step 2/4. In terms of biological role, catalyzes the reversible isomerization of glucose-6-phosphate to fructose-6-phosphate. This Alkaliphilus metalliredigens (strain QYMF) protein is Glucose-6-phosphate isomerase.